We begin with the raw amino-acid sequence, 699 residues long: TPR repeat-containing thioredoxin TTL1 (699 aa).

Residues 1–211 form a disordered region; that stretch reads MPKSVKPISE…SSSRSSSTVA (211 aa). The span at 9-20 shows a compositional bias: basic and acidic residues; that stretch reads SESDKLSDHLRD. S39 and S42 each carry phosphoserine. Composition is skewed to low complexity over residues 52-70 and 83-135; these read TTTT…SSGS and RSNS…TSPA. The span at 166-182 shows a compositional bias: gly residues; that stretch reads SGTGTYGHGSIMRGGGI. Low complexity predominate over residues 195–210; the sequence is NSPVNVGSSSRSSSTV. TPR repeat units follow at residues 227–260, 262–294, 296–328, 419–452, 465–498, 499–532, and 534–566; these read SEEV…SPTN, AYRS…DPNY, RAHH…SDPM, AYIY…DPRC, VARA…DPCN, AILY…QPSY, and KPLL…LPHD. The Thioredoxin domain maps to 605 to 691; sequence QFKSAMNLPG…IVCPSKEVLE (87 aa).

In terms of tissue distribution, expressed in the root elongation zone, stele, root cap, embryo vascular system, leaf axilar buds, silique abscission zone and guard cells.

Functionally, involved in responses to osmotic stress and abscisic acid (ABA). May act as a positive regulator of ABA signaling during germination and seedling development under stress. The sequence is that of TPR repeat-containing thioredoxin TTL1 (TTL1) from Arabidopsis thaliana (Mouse-ear cress).